Consider the following 135-residue polypeptide: Protein PsiE homolog (135 aa).

4 helical membrane passes run 14 to 34 (LQTI…IFLV), 54 to 74 (YQLI…ALIV), 82 to 102 (HFPL…LIIV), and 107 to 127 (PSDT…LYLA).

This sequence belongs to the PsiE family.

The protein resides in the cell inner membrane. The chain is Protein PsiE homolog from Pectobacterium atrosepticum (strain SCRI 1043 / ATCC BAA-672) (Erwinia carotovora subsp. atroseptica).